The following is a 519-amino-acid chain: Probable cytochrome P450 6g2 (519 aa).

C460 provides a ligand contact to heme.

It belongs to the cytochrome P450 family. The cofactor is heme.

It is found in the endoplasmic reticulum membrane. The protein localises to the microsome membrane. In terms of biological role, may be involved in the metabolism of insect hormones and in the breakdown of synthetic insecticides. This chain is Probable cytochrome P450 6g2 (Cyp6g2), found in Drosophila melanogaster (Fruit fly).